The following is an 842-amino-acid chain: Glucans biosynthesis glucosyltransferase H (842 aa).

A run of 8 helical transmembrane segments spans residues 140-160 (ILLL…KTIL), 194-214 (ILIL…TALM), 513-533 (VFLT…FLAL), 568-588 (IALF…SIIL), 600-620 (FIRV…LAPV), 622-642 (MLFH…VWNS), 656-676 (FMRH…MAWL), and 680-700 (FLFW…VSAI).

This sequence belongs to the glycosyltransferase 2 family. OpgH subfamily.

It is found in the cell inner membrane. The protein operates within glycan metabolism; osmoregulated periplasmic glucan (OPG) biosynthesis. Functionally, involved in the biosynthesis of osmoregulated periplasmic glucans (OPGs). This chain is Glucans biosynthesis glucosyltransferase H, found in Klebsiella pneumoniae (strain 342).